Consider the following 356-residue polypeptide: MAIVSSITNHSSLPNDKGEERLVGPSLLKEELKLSQQDSLRPKSFDDFVGQSELKKVLEISVKASLKRGEALDHLMLYGPPGLGKTTMALVIAEELGVKARVTSAPALERPRDIVGLLINIQPRELIFVDEIHRLNRISQELLYPAMEDRRLDLTVGKGTSSRMRSIEIPPFTLVGATTKPAALSSPMRDRFGITQRLDFYNYLDLENIIKRSAKLINLVISEEASQQLAKRCRGTPRIANRLIRRVRDYAEVYSHSKKIDVEVVNDALDLHRVDQRGLDATDRSYIGLLVNQYQGGPVGLETLAAGLGEDSTTLETVVEPYLMQIGFLHRTSRGRVVTPAAKKHYLLTSPNNIDK.

Positions 1 to 14 (MAIVSSITNHSSLP) are enriched in polar residues. The interval 1-20 (MAIVSSITNHSSLPNDKGEE) is disordered. The tract at residues 13–201 (LPNDKGEERL…FGITQRLDFY (189 aa)) is large ATPase domain (RuvB-L). Residues leucine 40, arginine 41, glycine 82, lysine 85, threonine 86, threonine 87, arginine 191, tyrosine 201, and arginine 238 each coordinate ATP. Threonine 86 lines the Mg(2+) pocket. A small ATPAse domain (RuvB-S) region spans residues 202–273 (NYLDLENIIK…VVNDALDLHR (72 aa)). Residues 276–356 (QRGLDATDRS…LLTSPNNIDK (81 aa)) form a head domain (RuvB-H) region. DNA is bound by residues arginine 331 and arginine 336.

This sequence belongs to the RuvB family. In terms of assembly, homohexamer. Forms an RuvA(8)-RuvB(12)-Holliday junction (HJ) complex. HJ DNA is sandwiched between 2 RuvA tetramers; dsDNA enters through RuvA and exits via RuvB. An RuvB hexamer assembles on each DNA strand where it exits the tetramer. Each RuvB hexamer is contacted by two RuvA subunits (via domain III) on 2 adjacent RuvB subunits; this complex drives branch migration. In the full resolvosome a probable DNA-RuvA(4)-RuvB(12)-RuvC(2) complex forms which resolves the HJ.

The protein localises to the cytoplasm. It carries out the reaction ATP + H2O = ADP + phosphate + H(+). Its function is as follows. The RuvA-RuvB-RuvC complex processes Holliday junction (HJ) DNA during genetic recombination and DNA repair, while the RuvA-RuvB complex plays an important role in the rescue of blocked DNA replication forks via replication fork reversal (RFR). RuvA specifically binds to HJ cruciform DNA, conferring on it an open structure. The RuvB hexamer acts as an ATP-dependent pump, pulling dsDNA into and through the RuvAB complex. RuvB forms 2 homohexamers on either side of HJ DNA bound by 1 or 2 RuvA tetramers; 4 subunits per hexamer contact DNA at a time. Coordinated motions by a converter formed by DNA-disengaged RuvB subunits stimulates ATP hydrolysis and nucleotide exchange. Immobilization of the converter enables RuvB to convert the ATP-contained energy into a lever motion, pulling 2 nucleotides of DNA out of the RuvA tetramer per ATP hydrolyzed, thus driving DNA branch migration. The RuvB motors rotate together with the DNA substrate, which together with the progressing nucleotide cycle form the mechanistic basis for DNA recombination by continuous HJ branch migration. Branch migration allows RuvC to scan DNA until it finds its consensus sequence, where it cleaves and resolves cruciform DNA. This is Holliday junction branch migration complex subunit RuvB from Prochlorococcus marinus (strain NATL2A).